Reading from the N-terminus, the 418-residue chain is Deoxyribonuclease Tat-D (418 aa).

Positions 185, 226, 277, and 327 each coordinate a divalent metal cation.

This sequence belongs to the metallo-dependent hydrolases superfamily. TatD-type hydrolase family. It depends on Mg(2+) as a cofactor.

Its subcellular location is the cytoplasm. Functionally, has both endo- and exonuclease activities. Incises double-stranded DNA without obvious specificity via its endonuclease activity and excises the DNA from the 3'-to 5'-end by its exonuclease activity. May have a role in apoptosis. This chain is Deoxyribonuclease Tat-D, found in Saccharomyces cerevisiae (strain ATCC 204508 / S288c) (Baker's yeast).